We begin with the raw amino-acid sequence, 58 residues long: Alpha-conotoxin-like Pu1.6 (58 aa).

The first 17 residues, 1 to 17 (MFTVFLLVVLVTTVVFS), serve as a signal peptide directing secretion. Positions 18–35 (TSDHRPASNHENRRASKR) are excised as a propeptide. 2 disulfide bridges follow: Cys44–Cys50 and Cys45–Cys58. The segment at 46-48 (TNP) is lacks the Ser-Xaa-Pro motif that is crucial for potent interaction with nAChR.

It belongs to the conotoxin A superfamily. Expressed by the venom duct.

It localises to the secreted. In terms of biological role, alpha-conotoxins act on postsynaptic membranes, they bind to the nicotinic acetylcholine receptors (nAChR) and thus inhibit them. Has possibly a distinct nAChR binding mode from other alpha-conotoxins, due to a different three residue motif (lacks the Ser-Xaa-Pro motif). The sequence is that of Alpha-conotoxin-like Pu1.6 from Conus pulicarius (Flea-bitten cone).